The following is a 470-amino-acid chain: Uronate isomerase (470 aa).

It belongs to the metallo-dependent hydrolases superfamily. Uronate isomerase family.

The catalysed reaction is D-glucuronate = D-fructuronate. The enzyme catalyses aldehydo-D-galacturonate = keto-D-tagaturonate. It participates in carbohydrate metabolism; pentose and glucuronate interconversion. This is Uronate isomerase from Vibrio vulnificus (strain CMCP6).